Reading from the N-terminus, the 295-residue chain is Cuticle collagen 3A3 (295 aa).

Residues 81-278 (AITSSEENGG…GRPGEPGICP (198 aa)) form a disordered region. 2 stretches are compositionally biased toward pro residues: residues 97–109 (PGPP…PGRP) and 146–160 (AGPP…PPGD). 3 triple-helical region regions span residues 98–127 (GPPG…PGLP), 147–203 (GPPG…VGED), and 212–277 (GDQG…PGIC). Low complexity predominate over residues 172–182 (QDGIPGQQGTK). Residues 217-228 (PGEPGPEGPPGE) are compositionally biased toward pro residues. The segment covering 229–244 (PGLQGPVGMPGQVGQK) has biased composition (low complexity). Residues 261-271 (RPGPPGPPGRP) are compositionally biased toward pro residues.

Belongs to the cuticular collagen family.

Functionally, nematode cuticles are composed largely of collagen-like proteins. The cuticle functions both as an exoskeleton and as a barrier to protect the worm from its environment. This chain is Cuticle collagen 3A3 (3A3), found in Haemonchus contortus (Barber pole worm).